Reading from the N-terminus, the 256-residue chain is Homeobox protein ceh-34 (256 aa).

Positions 134-193 (GEETNYCFKSKSRNVLRDAYKKCQYPSVEDKRRLAQQTELSIIQVSNWFKNKRQRERAAG) form a DNA-binding region, homeobox. Residues 187-233 (QRERAAGQLDRSSARSNDSDDGSSGCESKPPMNIDSPAPPPLPTSFD) form a disordered region.

Belongs to the SIX/Sine oculis homeobox family. Interacts (via N-terminus) with eya-1 (via C-terminus). As to expression, shows expression only in the pharyngeal nervous system.

Its subcellular location is the nucleus. Functionally, acts as a transcription regulator. Binds to the sequence motif 5'-TCAGGTT-3'. Binds to the cis-regulatory element of proapoptotic factor egl-1 gene and together with eya-1 activates egl-1 expression to promote motor neuron M4 sister cell apoptosis. Also promotes apoptosis of I1 pharyngeal neuron sister cell. Together with eya-1, required to specify the coelomocyte fate in embryonic and postembryonic precursors. Required to establish and maintain the differentiation of all 14 classes of pharyngeal neurons. Controls the neurotransmitter signaling capacity of the neurons and is required for the expression of some neurotransmitter receptors including mgl-1, glr-2 and ser-7. Affects the neuropeptidergic identity of pharyngeal neurons. Required for the pharyngeal expression of sensory receptors gur-3, glu-7 and str-97, antimicrobial defense genes such as spp-12, gpla-1/flr-2 and htrl-1, and pan-pharyngeal nervous system genes such as kin-36. Required to establish and maintain pharyngeal nervous system architecture by ensuring correct axon and synapse organization. Required for expression of eya-1 which may act as a transcriptional cofactor to specify distinct pharyngeal neuron types. Cooperates with several homeobox proteins to specify distinct pharyngeal neuron types including unc-86 in the NSM and I1 neurons, ceh-14 in the I2 neuron, ceh-2 and pros-1 in the I3 neuron, ceh-45 in the M1 neuron, ceh-2 in the M3 neuron, ceh-28 and zag-1 in the M4 neuron, and vab-15 in the M5 neuron. This Caenorhabditis elegans protein is Homeobox protein ceh-34 (ceh-34).